The following is a 513-amino-acid chain: Probable DNA ligase (513 aa).

Position 213 (Glu-213) interacts with ATP. The N6-AMP-lysine intermediate role is filled by Lys-215. ATP-binding residues include Arg-220, Arg-235, Glu-264, Phe-304, Arg-376, and Lys-382.

Belongs to the ATP-dependent DNA ligase family. It depends on Mg(2+) as a cofactor.

The catalysed reaction is ATP + (deoxyribonucleotide)n-3'-hydroxyl + 5'-phospho-(deoxyribonucleotide)m = (deoxyribonucleotide)n+m + AMP + diphosphate.. Its function is as follows. DNA ligase that seals nicks in double-stranded DNA during DNA replication, DNA recombination and DNA repair. The sequence is that of Probable DNA ligase from Anaeromyxobacter sp. (strain K).